Here is an 806-residue protein sequence, read N- to C-terminus: Lon protease 1 (806 aa).

In terms of domain architecture, Lon N-terminal spans Val-31–Leu-235. Gly-389–Thr-396 is a binding site for ATP. In terms of domain architecture, Lon proteolytic spans Ala-626–Phe-806. Residues Ser-714 and Lys-757 contribute to the active site.

The protein belongs to the peptidase S16 family. In terms of assembly, homohexamer. Organized in a ring with a central cavity.

Its subcellular location is the cytoplasm. It catalyses the reaction Hydrolysis of proteins in presence of ATP.. Its function is as follows. ATP-dependent serine protease that mediates the selective degradation of mutant and abnormal proteins as well as certain short-lived regulatory proteins. Required for cellular homeostasis and for survival from DNA damage and developmental changes induced by stress. Degrades polypeptides processively to yield small peptide fragments that are 5 to 10 amino acids long. Binds to DNA in a double-stranded, site-specific manner. The polypeptide is Lon protease 1 (Borreliella burgdorferi (strain ATCC 35210 / DSM 4680 / CIP 102532 / B31) (Borrelia burgdorferi)).